The primary structure comprises 301 residues: MKTKAGFVALIGKPNAGKSTLLNTLLNAHLALVSHKANATRKLMKCIVPFKDKEWYESQIIFLDTPGLHHQEKLLNQCMLSQALKAMGDAELCVFLASVHDDLKGYEEFLSLCQKPHILALSKIDTATHKQVLQKLQEYQQYDSQFLALVPLSAKKSQNLNALLECISQHLSPSAWLFEKDLMSDEKMRDIYKEIIRESLFDFLSDEIPYESDVMIDKFIEEERIDKVYARIIVEKESQKKIVIGKNGVNIKRIGTNARLKMQEVGEKKVFLNLQVIAQKSWSKEEKSLQKLGYIHRRNRD.

An Era-type G domain is found at 4–173 (KAGFVALIGK…LECISQHLSP (170 aa)). The tract at residues 12-19 (GKPNAGKS) is G1. Residue 12-19 (GKPNAGKS) participates in GTP binding. The tract at residues 38–42 (NATRK) is G2. Residues 64–67 (DTPG) are G3. GTP contacts are provided by residues 64–68 (DTPGL) and 122–125 (SKID). Residues 122–125 (SKID) form a G4 region. The segment at 152-154 (LSA) is G5. Positions 204–280 (LSDEIPYESD…FLNLQVIAQK (77 aa)) constitute a KH type-2 domain.

This sequence belongs to the TRAFAC class TrmE-Era-EngA-EngB-Septin-like GTPase superfamily. Era GTPase family. In terms of assembly, monomer.

It is found in the cytoplasm. The protein localises to the cell inner membrane. An essential GTPase that binds both GDP and GTP, with rapid nucleotide exchange. Plays a role in 16S rRNA processing and 30S ribosomal subunit biogenesis and possibly also in cell cycle regulation and energy metabolism. This is GTPase Era from Helicobacter pylori (strain ATCC 700392 / 26695) (Campylobacter pylori).